The chain runs to 495 residues: Protein SLENDER RICE1-LIKE 1 (495 aa).

One can recognise a GRAS domain in the interval 77 to 449 (EEEEVAGIRL…RPLFSASAWE (373 aa)). Residues 84–140 (IRLVHLLMSCAGAIEAGDHALASAQLADSHAALAAVSAASGIGRVAVHFTTALSRRL) form a leucine repeat I (LRI) region. A VHIID region spans residues 158-223 (YHHFYEACPY…GGPPFLRITG (66 aa)). Residues 189–193 (VHVID) carry the VHIID motif. The leucine repeat II (LRII) stretch occupies residues 237–269 (DVGLRLADLARSVRVRFSFRGVAANSLDEVRPW). Positions 279–371 (VAFNSVLQLH…EAYLQREICD (93 aa)) are PFYRE. Positions 287 to 291 (LHRLL) match the LXXLL motif motif. An SAW region spans residues 374–449 (CGEGAARRER…RPLFSASAWE (76 aa)). The disordered stretch occupies residues 451 to 495 (AGDGGGDNNNNSNSNVSGSSGSDSNNSGSSNGKSSGARDGSSVCL). A compositionally biased stretch (low complexity) spans 458 to 485 (NNNNSNSNVSGSSGSDSNNSGSSNGKSS).

Belongs to the GRAS family. Expressed in elongating internodes and flowers. Expressed in floral meristem, stamen primordia and tapetum in developing anthers. Expressed at low levels in roots, shoot apices and rachis.

It localises to the nucleus. In terms of biological role, probable transcriptional regulator that acts as a repressor of the gibberellin (GA) signaling pathway. Its repressive activity is weaker than that of SLR1. Its overexpression prevents the GA signaling pathway and induces a dwarf phenotype. This is Protein SLENDER RICE1-LIKE 1 from Oryza sativa subsp. japonica (Rice).